The chain runs to 418 residues: ATP-dependent Clp protease ATP-binding subunit ClpX (418 aa).

Residues 1–54 (MTRKDDESDQFFCSFCGKNQKEVKKLIAGPSVYICNECVSLCEEIIEDEDKESL) form the ClpX-type ZB domain. Zn(2+)-binding residues include Cys13, Cys16, Cys35, and Cys38. 120–127 (PTGCGKTL) serves as a coordination point for ATP.

Belongs to the ClpX chaperone family. As to quaternary structure, component of the ClpX-ClpP complex. Forms a hexameric ring that, in the presence of ATP, binds to fourteen ClpP subunits assembled into a disk-like structure with a central cavity, resembling the structure of eukaryotic proteasomes.

In terms of biological role, ATP-dependent specificity component of the Clp protease. It directs the protease to specific substrates. Can perform chaperone functions in the absence of ClpP. The polypeptide is ATP-dependent Clp protease ATP-binding subunit ClpX (Desulforapulum autotrophicum (strain ATCC 43914 / DSM 3382 / VKM B-1955 / HRM2) (Desulfobacterium autotrophicum)).